Consider the following 152-residue polypeptide: Transcriptional regulator MraZ (152 aa).

2 consecutive SpoVT-AbrB domains span residues 5–52 and 81–124; these read ATLV…PLPE and ASEC…DETT.

Belongs to the MraZ family. As to quaternary structure, forms oligomers.

It is found in the cytoplasm. It localises to the nucleoid. Negatively regulates its own expression and that of the subsequent genes in the proximal part of the division and cell wall (dcw) gene cluster. Acts by binding directly to DNA. May also regulate the expression of genes outside the dcw cluster. In Salmonella typhi, this protein is Transcriptional regulator MraZ.